Reading from the N-terminus, the 502-residue chain is Cytochrome P450 83A1 (502 aa).

A helical transmembrane segment spans residues 1–21 (MEDIIIGVVALAAVLLFFLYQ). Cysteine 442 serves as a coordination point for heme.

This sequence belongs to the cytochrome P450 family. Heme is required as a cofactor.

Its subcellular location is the endoplasmic reticulum membrane. It catalyses the reaction an (E)-omega-(methylsulfanyl)-alkanal oxime + glutathione + reduced [NADPH--hemoprotein reductase] + O2 = an S-[(1E)-1-(hydroxyimino)-omega-(methylsulfanyl)alkyl]-L-glutathione + oxidized [NADPH--hemoprotein reductase] + 2 H2O + H(+). Functionally, involved in the metabolism of aliphatic and aromatic oximes. Involved in the biosynthesis of both short-chain and long-chain aliphatic glucosinolates. The chain is Cytochrome P450 83A1 (CYP83A1) from Arabidopsis thaliana (Mouse-ear cress).